The chain runs to 299 residues: DNA-binding transcriptional activator HetR (299 aa).

Residue serine 152 is part of the active site.

It belongs to the peptidase S48 family. Homodimer; disulfide-linked.

In terms of biological role, controls heterocyst differentiation. Dimerization is required for DNA-binding. Has both a protease and a DNA-binding activity. Increased expression leads to more heterocysts than usual. The protein is DNA-binding transcriptional activator HetR of Nostoc punctiforme (strain ATCC 29133 / PCC 73102).